The following is a 185-amino-acid chain: Elongation factor P (185 aa).

The protein belongs to the elongation factor P family.

The protein resides in the cytoplasm. The protein operates within protein biosynthesis; polypeptide chain elongation. Involved in peptide bond synthesis. Stimulates efficient translation and peptide-bond synthesis on native or reconstituted 70S ribosomes in vitro. Probably functions indirectly by altering the affinity of the ribosome for aminoacyl-tRNA, thus increasing their reactivity as acceptors for peptidyl transferase. In Bacillus cytotoxicus (strain DSM 22905 / CIP 110041 / 391-98 / NVH 391-98), this protein is Elongation factor P.